The primary structure comprises 179 residues: Large ribosomal subunit protein uL5 (179 aa).

Belongs to the universal ribosomal protein uL5 family. As to quaternary structure, part of the 50S ribosomal subunit; part of the 5S rRNA/L5/L18/L25 subcomplex. Contacts the 5S rRNA and the P site tRNA. Forms a bridge to the 30S subunit in the 70S ribosome.

Its function is as follows. This is one of the proteins that bind and probably mediate the attachment of the 5S RNA into the large ribosomal subunit, where it forms part of the central protuberance. In the 70S ribosome it contacts protein S13 of the 30S subunit (bridge B1b), connecting the 2 subunits; this bridge is implicated in subunit movement. Contacts the P site tRNA; the 5S rRNA and some of its associated proteins might help stabilize positioning of ribosome-bound tRNAs. The protein is Large ribosomal subunit protein uL5 of Bordetella avium (strain 197N).